The following is a 235-amino-acid chain: Vacuolar protein sorting-associated protein 60.1 (235 aa).

Residues 1–29 (MRRVFGAKKNTEPPPSIQDASDRINKRGD) are disordered. The span at 20 to 29 (ASDRINKRGD) shows a compositional bias: basic and acidic residues. Positions 99 to 148 (LKDAQQTMTALKSANKELKGMMKTVKIQDIDNLQDEMMDLMDVSSEIQES) form a coiled coil. The tract at residues 175 to 235 (MGNETEADGM…PAVPRASLRG (61 aa)) is disordered.

This sequence belongs to the SNF7 family. As to quaternary structure, interacts with SKD1/VPS4 and LIP5. Interacts with VPS2.2.

Its subcellular location is the endosome. It localises to the multivesicular body membrane. Probable peripherally associated component of the endosomal sorting required for transport complex III (ESCRT-III) which is involved in multivesicular bodies (MVBs) formation and sorting of endosomal cargo proteins into MVBs. The chain is Vacuolar protein sorting-associated protein 60.1 from Arabidopsis thaliana (Mouse-ear cress).